The sequence spans 158 residues: UPF0758 protein YkfG (158 aa).

One can recognise an MPN domain in the interval 36–158; that stretch reads AFTSTHAVRE…IYSFAEHGLL (123 aa). 3 residues coordinate Zn(2+): H107, H109, and D120. Positions 107-120 match the JAMM motif motif; the sequence is HNHPSGETTPSQAD.

It belongs to the UPF0758 family.

The sequence is that of UPF0758 protein YkfG (ykfG) from Escherichia coli (strain K12).